The following is a 423-amino-acid chain: Cytidylate cyclase (423 aa).

The Guanylate cyclase domain maps to 79–184 (CSLFVDISGS…LKIRIGIDFG (106 aa)). Phe82 contacts a ribonucleoside 5'-triphosphate. The Mn(2+) site is built by Asp84, Ile85, and Asp128. The AGS-C domain stretch occupies residues 290 to 409 (ENEQFYSPRD…ICHDSFGLFI (120 aa)).

It belongs to the adenylyl cyclase class-4/guanylyl cyclase family. Pyrimidine cyclase subfamily. Homodimer. It depends on Mn(2+) as a cofactor.

It localises to the cytoplasm. It carries out the reaction CTP = 3',5'-cyclic CMP + diphosphate. Functionally, pycsar (pyrimidine cyclase system for antiphage resistance) provides immunity against bacteriophage. The pyrimidine cyclase (PycC) synthesizes cyclic nucleotides in response to infection; these serve as specific second messenger signals. The signal activates the adjacent effector, leading to bacterial cell death and abortive phage infection. A clade E Pycsar system. Its function is as follows. The pyrimidine cyclase gene of a two-gene Pycsar system, weakly generates cyclic CMP (cCMP) from CTP, has little to no activity on ATP, GTP or UTP. Expression of this and adjacent effector SaPycTM (AC P0DV39) probably confers resistance to bacteriophage. The genes are probably only expressed in response to bacteriophage infection. This is Cytidylate cyclase from Staphylococcus aureus.